The primary structure comprises 133 residues: Ribonuclease VapC28 (133 aa).

The PINc domain maps to 1–124 (MIVDTSAIIA…LWKGNDFGHT (124 aa)). The Mg(2+) site is built by D4 and D100.

It belongs to the PINc/VapC protein family. Requires Mg(2+) as cofactor.

Its function is as follows. Toxic component of a type II toxin-antitoxin (TA) system. An RNase. Upon expression in M.smegmatis inhibits colony formation. Its toxic effect is neutralized by coexpression with cognate antitoxin VapB28. The polypeptide is Ribonuclease VapC28 (Mycobacterium tuberculosis (strain ATCC 25618 / H37Rv)).